The chain runs to 252 residues: dITP/XTP pyrophosphatase (252 aa).

7–12 is a binding site for substrate; it reads THNEGK. Catalysis depends on D74, which acts as the Proton acceptor. Mg(2+) is bound at residue D74. Substrate-binding positions include S75 and 193 to 196; that span reads FGYD. Residues 202–229 are disordered; it reads DDQPAGRVSTEPDHEGEPLTSAEMTPAE. Residues K230 and 235–236 contribute to the substrate site; that span reads HR.

Belongs to the HAM1 NTPase family. Homodimer. Mg(2+) serves as cofactor.

It catalyses the reaction XTP + H2O = XMP + diphosphate + H(+). The enzyme catalyses dITP + H2O = dIMP + diphosphate + H(+). The catalysed reaction is ITP + H2O = IMP + diphosphate + H(+). Its function is as follows. Pyrophosphatase that catalyzes the hydrolysis of nucleoside triphosphates to their monophosphate derivatives, with a high preference for the non-canonical purine nucleotides XTP (xanthosine triphosphate), dITP (deoxyinosine triphosphate) and ITP. Seems to function as a house-cleaning enzyme that removes non-canonical purine nucleotides from the nucleotide pool, thus preventing their incorporation into DNA/RNA and avoiding chromosomal lesions. The protein is dITP/XTP pyrophosphatase of Bifidobacterium longum (strain DJO10A).